The sequence spans 431 residues: SH2 domain-containing protein 4B (431 aa).

A disordered region spans residues 201-235; the sequence is QASENEEREWEEQLRRSKAADEERSRRAQRARDEY. The span at 211–235 shows a compositional bias: basic and acidic residues; sequence EEQLRRSKAADEERSRRAQRARDEY. Positions 325-417 constitute an SH2 domain; the sequence is WFHGIISRES…SGGELLQEPC (93 aa).

The chain is SH2 domain-containing protein 4B (Sh2d4b) from Mus musculus (Mouse).